Here is a 300-residue protein sequence, read N- to C-terminus: Cytochrome b (300 aa).

A run of 6 helical transmembrane segments spans residues 28-48 (YGFL…LLAL), 72-94 (WCFR…LHIL), 107-127 (SWIS…YGYV), 168-187 (FFVF…FGIL), 223-243 (IPNK…LFLL), and 279-299 (IGCQ…YIIL). Residues H78 and H92 each contribute to the heme b site.

It belongs to the cytochrome b family. The main subunits of complex b-c1 are: cytochrome b, cytochrome c1 and the Rieske protein. Requires heme b as cofactor.

It localises to the mitochondrion inner membrane. Component of the ubiquinol-cytochrome c reductase complex (complex III or cytochrome b-c1 complex) that is part of the mitochondrial respiratory chain. The b-c1 complex mediates electron transfer from ubiquinol to cytochrome c. Contributes to the generation of a proton gradient across the mitochondrial membrane that is then used for ATP synthesis. In Plasmodium gallinaceum, this protein is Cytochrome b (MT-CYB).